A 292-amino-acid chain; its full sequence is Ribosomal RNA small subunit methyltransferase A (292 aa).

6 residues coordinate S-adenosyl-L-methionine: Asn28, Leu30, Gly55, Glu76, Asp101, and Asn126.

Belongs to the class I-like SAM-binding methyltransferase superfamily. rRNA adenine N(6)-methyltransferase family. RsmA subfamily.

The protein localises to the cytoplasm. It catalyses the reaction adenosine(1518)/adenosine(1519) in 16S rRNA + 4 S-adenosyl-L-methionine = N(6)-dimethyladenosine(1518)/N(6)-dimethyladenosine(1519) in 16S rRNA + 4 S-adenosyl-L-homocysteine + 4 H(+). Functionally, specifically dimethylates two adjacent adenosines (A1518 and A1519) in the loop of a conserved hairpin near the 3'-end of 16S rRNA in the 30S particle. May play a critical role in biogenesis of 30S subunits. In Bacillus mycoides (strain KBAB4) (Bacillus weihenstephanensis), this protein is Ribosomal RNA small subunit methyltransferase A.